The following is a 500-amino-acid chain: Abscisic acid 8'-hydroxylase 3 (500 aa).

Residues 3 to 23 traverse the membrane as a helical segment; the sequence is ASFVIVIVISFFISLAFMCYV. Cysteine 426 lines the heme pocket.

Belongs to the cytochrome P450 family. Requires heme as cofactor.

The protein resides in the membrane. It catalyses the reaction 2-cis-(+)-abscisate + reduced [NADPH--hemoprotein reductase] + O2 = (+)-8'-hydroxyabscisate + oxidized [NADPH--hemoprotein reductase] + H2O + H(+). It functions in the pathway plant hormone degradation; abscisic acid degradation. Its function is as follows. Involved in the oxidative degradation of abscisic acid. The polypeptide is Abscisic acid 8'-hydroxylase 3 (CYP707A7) (Oryza sativa subsp. indica (Rice)).